Consider the following 910-residue polypeptide: Adhesion G-protein coupled receptor F1 (910 aa).

Residues 1-19 form the signal peptide; the sequence is MKVGVLWLISFFTFTDGHG. Over 20–583 the chain is Extracellular; sequence GFLGKNDGIK…SPFVPSTIFP (564 aa). N-linked (GlcNAc...) asparagine glycosylation is found at Asn-139, Asn-168, Asn-205, Asn-282, Asn-310, Asn-317, Asn-329, Asn-354, Asn-368, Asn-389, Asn-410, Asn-423, Asn-437, Asn-455, Asn-512, Asn-528, and Asn-553. Positions 148–256 constitute an SEA domain; the sequence is ERTKIWGTFK…GSFRVFGKAQ (109 aa). Disulfide bonds link Cys-257–Cys-287 and Cys-275–Cys-299. A GAIN-B domain is found at 437-579; that stretch reads NKSQLKRGYS…SILMSPFVPS (143 aa). Disulfide bonds link Cys-534–Cys-561 and Cys-549–Cys-563. Positions 534 to 579 are GPS; it reads CVFWDFSHLQWNDAGCHLVNETQDIVTCQCTHLTSFSILMSPFVPS. The stachel stretch occupies residues 568-576; that stretch reads SFSILMSPF. Residues 584-609 traverse the membrane as a helical segment; it reads VVKWITYVGLGISIGSLILCLIIEAL. The Cytoplasmic portion of the chain corresponds to 610 to 621; the sequence is FWKQIKKSQTSH. A helical transmembrane segment spans residues 622-646; sequence TRRICMVNIALSLLIADVWFIVGAT. Residues 647–658 lie on the Extracellular side of the membrane; it reads VDTTVNPSGVCT. Cys-657 and Cys-733 are disulfide-bonded. The chain crosses the membrane as a helical span at residues 659-684; it reads AAVFFTHFFYLSLFFWMLMLGILLAY. Residues 685–696 lie on the Cytoplasmic side of the membrane; sequence RIILVFHHMAQH. The helical transmembrane segment at 697–719 threads the bilayer; sequence LMMAVGFCLGYGCPLIISVITIA. The Extracellular segment spans residues 720 to 742; the sequence is VTQPSNTYKRKDVCWLNWSNGSK. Residues Asn-736 and Asn-739 are each glycosylated (N-linked (GlcNAc...) asparagine). Residues 743–767 form a helical membrane-spanning segment; the sequence is PLLAFVVPALAIVAVNFVVVLLVLT. Residues 768–784 are Cytoplasmic-facing; that stretch reads KLWRPTVGERLSRDDKA. Residues 785-813 form a helical membrane-spanning segment; the sequence is TIIRVGKSLLILTPLLGLTWGFGIGTIVD. Residues 814-816 are Extracellular-facing; the sequence is SQN. A helical transmembrane segment spans residues 817–842; that stretch reads LAWHVIFALLNAFQGFFILCFGILLD. Over 843–910 the chain is Cytoplasmic; the sequence is SKLRQLLFNK…IMLTQFVSNE (68 aa).

The protein belongs to the G-protein coupled receptor 2 family. Adhesion G-protein coupled receptor (ADGR) subfamily. As to quaternary structure, heterodimer of 2 chains generated by proteolytic processing; the large extracellular N-terminal fragment and the membrane-bound C-terminal fragment predominantly remain associated and non-covalently linked. Post-translationally, autoproteolytically processed at the GPS region of the GAIN-B domain; this cleavage modulates receptor activity. Glycosylated. Glycosylation at Asn-389 is required for secretion or folding. As to expression, mainly expressed in the kidney. Up-regulated in lung adenocarcinomas and prostate cancers.

The protein resides in the cell membrane. Its subcellular location is the secreted. Forms a heterodimer of 2 chains generated by proteolytic processing that remain associated through non-covalent interactions mediated by the GAIN-B domain. In the inactivated receptor, the Stachel sequence (also named stalk) is embedded in the GAIN-B domain, where it adopts a beta-strand conformation. On activation, the Stachel moves into the 7 transmembrane region and adopts a twisted hook-shaped configuration that forms contacts within the receptor, leading to coupling of a G-alpha protein, which activates signaling. The cleaved GAIN-B and N-terminal domains can then dissociate from the rest of the receptor. Adhesion G-protein coupled receptor (aGPCR) for N-docosahexaenoylethanolamine (synaptamide), an omega-3 fatty acid lipid highly enriched in the brain. Ligand binding causes a conformation change that triggers signaling via guanine nucleotide-binding proteins (G proteins) and modulates the activity of downstream effectors, such as adenylate cyclase. ADGRF1 is coupled to G(s) G proteins and mediates activation of adenylate cyclase activity. Also able to couple to G(q), G(i) and G(12)/G(13) G proteins; additional evidence is however required to confirm this result in vivo. Involved in the development of neurons and cognitive function. In liver, involved in fat accumulation. This chain is Adhesion G-protein coupled receptor F1, found in Homo sapiens (Human).